Consider the following 2403-residue polypeptide: Highly reducing polyketide synthase fogA (2403 aa).

The 426-residue stretch at 3–428 (DDPPCIVGMA…GANAHVILES (426 aa)) folds into the Ketosynthase family 3 (KS3) domain. Active-site for beta-ketoacyl synthase activity residues include cysteine 176, histidine 311, and histidine 350. The malonyl-CoA:ACP transacylase (MAT) domain stretch occupies residues 538–858 (VFTGQGAQYA…PYAPSLVRKE (321 aa)). Residue serine 632 is the For malonyltransferase activity of the active site. Positions 929–1068 (HELLGTFALT…GSIRVVEPLT (140 aa)) are N-terminal hotdog fold. The tract at residues 929–1238 (HELLGTFALT…DARMSLYTGK (310 aa)) is dehydratase (DH) domain. Positions 929–1241 (HELLGTFALT…MSLYTGKSSA (313 aa)) constitute a PKS/mFAS DH domain. Histidine 961 functions as the Proton acceptor; for dehydratase activity in the catalytic mechanism. Positions 1084 to 1241 (SFEASPTNRW…MSLYTGKSSA (158 aa)) are C-terminal hotdog fold. Aspartate 1152 serves as the catalytic Proton donor; for dehydratase activity. The enoyl reductase (ER) domain stretch occupies residues 1663 to 1981 (GATDSMFFQQ…QQDRIGKIVI (319 aa)). The ketoreductase (KR) domain stretch occupies residues 2006–2185 (VYLLIGCLGG…AVAVGLGMIS (180 aa)). The tract at residues 2280-2300 (AQNSTSSSGSNSNTPTTAAPW) is disordered. Residues 2282–2296 (NSTSSSGSNSNTPTT) are compositionally biased toward low complexity. The region spanning 2320–2398 (SLNAAILRLI…GLAVVVEGKL (79 aa)) is the Carrier domain. O-(pantetheine 4'-phosphoryl)serine is present on serine 2357.

The cofactor is pantetheine 4'-phosphate.

It participates in secondary metabolite biosynthesis. Functionally, highly reducing polyketide synthase; part of the gene cluster that mediates the biosynthesis of flavoglaucin and congeners (including aspergin, dihydroauroglaucin and auroglaucin), prenylated salicylaldehyde derivatives carrying a saturated or an unsaturated C-7 side chain. FogA releases the carboxylic acid (8E,10E,12E)-3,5,7-trihydroxytetradeca-8,10,12-trienoic acid as its product, as well as derivatives with one and two double bonds. FogA is indeed able to reduce the initial triketide, thus being at least partially responsible for the differently saturated heptyl side chains of flavoglaucin congeners. The oxidoreductases fogB, fogC and fogD modify the nascent polyketide in fogA-bound form and, together, fogA, fogB, fogC and fogD are necessary for the formation of the aromatic core and the cyclized PKS products are released as salicyl alcohols. In particular, fogB is responsible for oxidation of a hydroxyl group or reduction of remaining double bond(s) at the C-7 residue whereas fogD is probably involved in the reductive release of the modified PKS products. The cytochrome P450 monooxygenase fogE is then responsible for the hydroxylation at C-3 of the benzene ring. The fogE products are substrates of the prenyltransferase fogH and the prenylated benzyl alcohols are subsequently oxidized by the fogF to produce the final aryl aldehydes flavoglaucin and congeners. The short-chain dehydrogenase fogG does not seem to be involved in the biosynthesis of the prenylated salicylaldehyde derivatives. The polypeptide is Highly reducing polyketide synthase fogA (Aspergillus ruber (strain CBS 135680)).